A 389-amino-acid chain; its full sequence is Transcription factor MYB97 (389 aa).

HTH myb-type domains are found at residues 16-68 (GVVL…ANHL) and 69-123 (RPNL…KRFQ). 2 DNA-binding regions (H-T-H motif) span residues 44-68 (WNSVQKKTWLARCGKSCRLRWANHL) and 96-119 (WARMAAQLPGRTDNEIKNYWNTRL). The segment at 131-159 (PPEYSQNNHQQQMYPQQPSSPLPSQTPAS) is disordered. Low complexity predominate over residues 140–159 (QQQMYPQQPSSPLPSQTPAS).

Accumulates in pollen grains and pollen tube. Mostly expressed in mature pollen grains, and, to a lower extent, in inflorescences and siliques.

Its subcellular location is the nucleus. Transcription activator. Binds to 5'-CAACTGTC-3' and/or 5'-TAACAAA-3' motif in target gene promoter to promote their expression. Together with MYB101 and MYB120, functions as a male factor that controls pollen tube-synergid interaction in fertilization. Required for pollen tube growth arrest and sperm cell release in the female gametophyte, probably via the regulation of pollen tube-specific gene expression. The chain is Transcription factor MYB97 from Arabidopsis thaliana (Mouse-ear cress).